Reading from the N-terminus, the 137-residue chain is Dormancy-associated protein homolog 3 (137 aa).

Disordered regions lie at residues M1–P55 and K69–M137. The span at F32–A43 shows a compositional bias: polar residues. Over residues P70 to P87 the composition is skewed to low complexity. S81 bears the Phosphoserine mark. Pro residues predominate over residues P88 to S97. The span at E104–E118 shows a compositional bias: basic and acidic residues. Positions G127–M137 are enriched in polar residues.

Belongs to the DRM1/ARP family.

This is Dormancy-associated protein homolog 3 from Arabidopsis thaliana (Mouse-ear cress).